A 510-amino-acid polypeptide reads, in one-letter code: Aromatic-L-amino-acid decarboxylase (510 aa).

Positions 1–17 (MSHIPISNTIPTKQTDG) are enriched in polar residues. The disordered stretch occupies residues 1–28 (MSHIPISNTIPTKQTDGNGKANISPDKL). Position 117 (Thr-117) interacts with substrate. Pyridoxal 5'-phosphate-binding residues include Ala-183, Ser-184, His-227, Asp-305, and Asn-334. His-227 contributes to the substrate binding site. His-227 is a catalytic residue. Lys-337 is subject to N6-(pyridoxal phosphate)lysine. Positions 358–384 (NAFNVDPLYLKHDMQGSAPDYRHWQIP) are disordered.

This sequence belongs to the group II decarboxylase family. Homodimer. Requires pyridoxal 5'-phosphate as cofactor. As to expression, hypoderm isoform is expressed only in hypodermal epithelium and the CNS isoform only in central nervous system. Expressed in the adult head (at protein level).

The catalysed reaction is L-dopa + H(+) = dopamine + CO2. It catalyses the reaction 5-hydroxy-L-tryptophan + H(+) = serotonin + CO2. Functionally, catalyzes the decarboxylation of L-3,4-dihydroxyphenylalanine (L-DOPA) to dopamine and L-5-hydroxytryptophan (5-HTP) to serotonin. Catalyzes the formation of serotonin more efficiently than dopamine. Displays no activity to tyrosine. Variation in the synthesis of bioamines may be a factor contributing to natural variation in life span. The polypeptide is Aromatic-L-amino-acid decarboxylase (Ddc) (Drosophila melanogaster (Fruit fly)).